A 596-amino-acid chain; its full sequence is Clathrin heavy chain linker domain-containing protein 1 (596 aa).

Positions 129–241 (QLEAKMRIIE…RDIAENLKKD (113 aa)) form a coiled coil.

In Mus musculus (Mouse), this protein is Clathrin heavy chain linker domain-containing protein 1 (Clhc1).